We begin with the raw amino-acid sequence, 448 residues long: Probable glycine dehydrogenase (decarboxylating) subunit 1 (448 aa).

This sequence belongs to the GcvP family. N-terminal subunit subfamily. As to quaternary structure, the glycine cleavage system is composed of four proteins: P, T, L and H. In this organism, the P 'protein' is a heterodimer of two subunits.

It carries out the reaction N(6)-[(R)-lipoyl]-L-lysyl-[glycine-cleavage complex H protein] + glycine + H(+) = N(6)-[(R)-S(8)-aminomethyldihydrolipoyl]-L-lysyl-[glycine-cleavage complex H protein] + CO2. Its function is as follows. The glycine cleavage system catalyzes the degradation of glycine. The P protein binds the alpha-amino group of glycine through its pyridoxal phosphate cofactor; CO(2) is released and the remaining methylamine moiety is then transferred to the lipoamide cofactor of the H protein. This Rhodospirillum rubrum (strain ATCC 11170 / ATH 1.1.1 / DSM 467 / LMG 4362 / NCIMB 8255 / S1) protein is Probable glycine dehydrogenase (decarboxylating) subunit 1.